We begin with the raw amino-acid sequence, 449 residues long: Xylose isomerase (449 aa).

Active-site residues include His101 and Asp104. 7 residues coordinate Mg(2+): Glu232, Glu268, His271, Asp296, Asp307, Asp309, and Asp340.

Belongs to the xylose isomerase family. As to quaternary structure, homotetramer. Mg(2+) serves as cofactor.

Its subcellular location is the cytoplasm. It carries out the reaction alpha-D-xylose = alpha-D-xylulofuranose. The chain is Xylose isomerase from Bifidobacterium longum (strain NCC 2705).